The primary structure comprises 288 residues: tRNA dimethylallyltransferase (288 aa).

2-9 contacts ATP; that stretch reads GPTAAGKS. 4-9 contacts substrate; sequence TAAGKS. Residues 27–30 are interaction with substrate tRNA; sequence DSMQ.

The protein belongs to the IPP transferase family. Monomer. Mg(2+) serves as cofactor.

The catalysed reaction is adenosine(37) in tRNA + dimethylallyl diphosphate = N(6)-dimethylallyladenosine(37) in tRNA + diphosphate. Its function is as follows. Catalyzes the transfer of a dimethylallyl group onto the adenine at position 37 in tRNAs that read codons beginning with uridine, leading to the formation of N6-(dimethylallyl)adenosine (i(6)A). This chain is tRNA dimethylallyltransferase, found in Frankia alni (strain DSM 45986 / CECT 9034 / ACN14a).